We begin with the raw amino-acid sequence, 236 residues long: Small ribosomal subunit protein uS2c (236 aa).

It belongs to the universal ribosomal protein uS2 family.

The protein resides in the plastid. The protein localises to the chloroplast. This Nicotiana tabacum (Common tobacco) protein is Small ribosomal subunit protein uS2c (rps2).